Reading from the N-terminus, the 352-residue chain is Biotin synthase (352 aa).

In terms of domain architecture, Radical SAM core spans 44–262 (NRVQVSTLLS…LAVARIMMPK (219 aa)). The [4Fe-4S] cluster site is built by cysteine 59, cysteine 63, and cysteine 66. [2Fe-2S] cluster-binding residues include cysteine 103, cysteine 134, cysteine 194, and arginine 266.

It belongs to the radical SAM superfamily. Biotin synthase family. In terms of assembly, homodimer. The cofactor is [4Fe-4S] cluster. [2Fe-2S] cluster is required as a cofactor.

The enzyme catalyses (4R,5S)-dethiobiotin + (sulfur carrier)-SH + 2 reduced [2Fe-2S]-[ferredoxin] + 2 S-adenosyl-L-methionine = (sulfur carrier)-H + biotin + 2 5'-deoxyadenosine + 2 L-methionine + 2 oxidized [2Fe-2S]-[ferredoxin]. The protein operates within cofactor biosynthesis; biotin biosynthesis; biotin from 7,8-diaminononanoate: step 2/2. Its function is as follows. Catalyzes the conversion of dethiobiotin (DTB) to biotin by the insertion of a sulfur atom into dethiobiotin via a radical-based mechanism. The polypeptide is Biotin synthase (Ectopseudomonas mendocina (strain ymp) (Pseudomonas mendocina)).